Here is a 303-residue protein sequence, read N- to C-terminus: Bidirectional sugar transporter SWEET14 (303 aa).

Topologically, residues 1-9 are extracellular; it reads MAGMSLQHP. Residues 10 to 30 traverse the membrane as a helical segment; the sequence is WAFAFGLLGNIISFMTYLAPL. A MtN3/slv 1 domain is found at 13–98; it reads AFGLLGNIIS…AVYLVYAPKK (86 aa). At 31 to 44 the chain is on the cytoplasmic side; it reads PTFYRIYKSKSTQG. A helical membrane pass occupies residues 45 to 65; sequence FQSVPYVVALFSAMLWIYYAL. The Extracellular portion of the chain corresponds to 66–72; that stretch reads LKSDECL. The chain crosses the membrane as a helical span at residues 73–93; the sequence is LITINSAGCVIETIYIAVYLV. The Cytoplasmic portion of the chain corresponds to 94 to 105; it reads YAPKKAKMFTAK. A helical transmembrane segment spans residues 106–126; it reads LLLLVNVGVFGLILLLTLLLS. Topologically, residues 127–133 are extracellular; it reads AGDRRIV. The helical transmembrane segment at 134–154 threads the bilayer; sequence VLGWVCVGFSVSVFVAPLSII. The region spanning 134-217 is the MtN3/slv 2 domain; the sequence is VLGWVCVGFS…MGLYAMYRNS (84 aa). Topologically, residues 155 to 167 are cytoplasmic; the sequence is RLVVRTKSVEFMP. A helical membrane pass occupies residues 168 to 188; sequence FSLSFSLTISAVVWFLYGLLI. The Extracellular segment spans residues 189-192; that stretch reads KDKY. The helical transmembrane segment at 193-213 threads the bilayer; it reads VALPNVLGFSFGVIQMGLYAM. At 214-303 the chain is on the cytoplasmic side; sequence YRNSTPKAVL…AGAGEKKVAA (90 aa). The interval 266 to 290 is disordered; it reads HPVDVESPPAEAPPQEDDKAAAATA.

This sequence belongs to the SWEET sugar transporter family. As to quaternary structure, forms homooligomers and/or heterooligomers.

It localises to the cell membrane. Mediates both low-affinity uptake and efflux of sugar across the plasma membrane. In Oryza sativa subsp. indica (Rice), this protein is Bidirectional sugar transporter SWEET14 (SWEET14).